The chain runs to 406 residues: Putative ankyrin repeat protein RF_0266 (406 aa).

ANK repeat units follow at residues 68-98, 103-129, 130-161, 163-189, and 203-232; these read TSHS…DINN, NYIT…QDDI, KVQN…IIKP, HIEL…DIEK, and SIDC…KPEQ.

In Rickettsia felis (strain ATCC VR-1525 / URRWXCal2) (Rickettsia azadi), this protein is Putative ankyrin repeat protein RF_0266.